The sequence spans 257 residues: UPF0246 protein KPK_4750 (257 aa).

It belongs to the UPF0246 family.

The chain is UPF0246 protein KPK_4750 from Klebsiella pneumoniae (strain 342).